A 378-amino-acid chain; its full sequence is Alcohol dehydrogenase 1 (378 aa).

Zn(2+) is bound at residue Cys48. 49-53 (HTDVL) contacts NAD(+). Residues His69, Cys99, Cys102, Cys105, Cys113, and Cys177 each coordinate Zn(2+). Residues 202-207 (GIGTVG), Asp226, Lys231, 274-276 (TGV), 297-299 (IGA), and 321-323 (TTF) contribute to the NAD(+) site.

It belongs to the zinc-containing alcohol dehydrogenase family. Class-IV subfamily. In terms of assembly, homodimer. The cofactor is Zn(2+). Expressed in flowers and disk florets.

It participates in isoprenoid biosynthesis. The polypeptide is Alcohol dehydrogenase 1 (Tanacetum cinerariifolium (Dalmatian daisy)).